We begin with the raw amino-acid sequence, 617 residues long: Chaperone protein DnaK (617 aa).

At Thr174 the chain carries Phosphothreonine; by autocatalysis. Over residues Ala575 to Gln592 the composition is skewed to low complexity. The tract at residues Ala575–Lys617 is disordered. The segment covering Thr593–Gly602 has biased composition (polar residues). Over residues Val607–Lys617 the composition is skewed to acidic residues.

This sequence belongs to the heat shock protein 70 family.

Its function is as follows. Acts as a chaperone. The protein is Chaperone protein DnaK of Halothermothrix orenii (strain H 168 / OCM 544 / DSM 9562).